The sequence spans 213 residues: 3-isopropylmalate dehydratase small subunit (213 aa).

This sequence belongs to the LeuD family. LeuD type 1 subfamily. In terms of assembly, heterodimer of LeuC and LeuD.

The enzyme catalyses (2R,3S)-3-isopropylmalate = (2S)-2-isopropylmalate. Its pathway is amino-acid biosynthesis; L-leucine biosynthesis; L-leucine from 3-methyl-2-oxobutanoate: step 2/4. In terms of biological role, catalyzes the isomerization between 2-isopropylmalate and 3-isopropylmalate, via the formation of 2-isopropylmaleate. The protein is 3-isopropylmalate dehydratase small subunit of Neisseria gonorrhoeae (strain ATCC 700825 / FA 1090).